Here is a 198-residue protein sequence, read N- to C-terminus: Ribonuclease HII (198 aa).

An RNase H type-2 domain is found at glutamine 10–serine 198. The a divalent metal cation site is built by aspartate 16, glutamate 17, and aspartate 108.

Belongs to the RNase HII family. Requires Mn(2+) as cofactor. Mg(2+) serves as cofactor.

It is found in the cytoplasm. The catalysed reaction is Endonucleolytic cleavage to 5'-phosphomonoester.. Functionally, endonuclease that specifically degrades the RNA of RNA-DNA hybrids. The polypeptide is Ribonuclease HII (Shigella sonnei (strain Ss046)).